Consider the following 64-residue polypeptide: UPF0434 protein Bcen_1934 (64 aa).

It belongs to the UPF0434 family.

This is UPF0434 protein Bcen_1934 from Burkholderia orbicola (strain AU 1054).